The following is a 395-amino-acid chain: Endophilin-B2 (395 aa).

Met1 carries the N-acetylmethionine modification. The segment at Met1–Phe27 is membrane-binding amphipathic helix. Ser10 is subject to Phosphoserine. The BAR domain maps to Glu24 to Gly287. Coiled-coil stretches lie at residues Ile116–Phe132 and Ala206–Glu240. Residues Ser335–Ser395 form the SH3 domain. Ser395 carries the post-translational modification Phosphoserine.

The protein belongs to the endophilin family. Homodimer, and heterodimer with SH3GLB1.

It localises to the cytoplasm. This is Endophilin-B2 (SH3GLB2) from Bos taurus (Bovine).